The following is a 479-amino-acid chain: Glutamyl-tRNA reductase (479 aa).

Substrate-binding positions include 49–52, Ser109, 114–116, and Gln120; these read TCNR and EQQ. Cys50 functions as the Nucleophile in the catalytic mechanism. Residue 191–196 participates in NADP(+) binding; the sequence is GAGSMG.

This sequence belongs to the glutamyl-tRNA reductase family. Homodimer.

It carries out the reaction (S)-4-amino-5-oxopentanoate + tRNA(Glu) + NADP(+) = L-glutamyl-tRNA(Glu) + NADPH + H(+). It functions in the pathway porphyrin-containing compound metabolism; protoporphyrin-IX biosynthesis; 5-aminolevulinate from L-glutamyl-tRNA(Glu): step 1/2. In terms of biological role, catalyzes the NADPH-dependent reduction of glutamyl-tRNA(Glu) to glutamate 1-semialdehyde (GSA). The protein is Glutamyl-tRNA reductase of Rhodococcus jostii (strain RHA1).